A 230-amino-acid chain; its full sequence is UPF0173 metal-dependent hydrolase Sca_1312 (230 aa).

It belongs to the UPF0173 family.

The sequence is that of UPF0173 metal-dependent hydrolase Sca_1312 from Staphylococcus carnosus (strain TM300).